We begin with the raw amino-acid sequence, 131 residues long: Type 3 secretion system pilotin (131 aa).

Positions 1–15 are cleaved as a signal peptide; it reads MSRIIALIISFLLVG. Residue Cys-16 is the site of N-palmitoyl cysteine attachment. Cys-16 is lipidated: S-diacylglycerol cysteine.

This sequence belongs to the ExsB/YscW family. In terms of assembly, interacts with YscC/SctC.

It localises to the cell outer membrane. Involved in the synthesis of the type III secretion system (T3SS), also called injectisome, which is used to inject bacterial effector proteins into eukaryotic host cells. Pilot protein that is required for the proper localization of the secretin YscC/SctC in the outer membrane. Also required for efficient oligomerization of YscC/SctC and stabilization of the oligomers. The polypeptide is Type 3 secretion system pilotin (Yersinia enterocolitica).